We begin with the raw amino-acid sequence, 198 residues long: NADH-quinone oxidoreductase subunit C (198 aa).

The protein belongs to the complex I 30 kDa subunit family. As to quaternary structure, NDH-1 is composed of 14 different subunits. Subunits NuoB, C, D, E, F, and G constitute the peripheral sector of the complex.

The protein localises to the cell inner membrane. The enzyme catalyses a quinone + NADH + 5 H(+)(in) = a quinol + NAD(+) + 4 H(+)(out). NDH-1 shuttles electrons from NADH, via FMN and iron-sulfur (Fe-S) centers, to quinones in the respiratory chain. The immediate electron acceptor for the enzyme in this species is believed to be ubiquinone. Couples the redox reaction to proton translocation (for every two electrons transferred, four hydrogen ions are translocated across the cytoplasmic membrane), and thus conserves the redox energy in a proton gradient. This chain is NADH-quinone oxidoreductase subunit C, found in Chromobacterium violaceum (strain ATCC 12472 / DSM 30191 / JCM 1249 / CCUG 213 / NBRC 12614 / NCIMB 9131 / NCTC 9757 / MK).